Reading from the N-terminus, the 345-residue chain is Phosphoribosylformylglycinamidine cyclo-ligase (345 aa).

This sequence belongs to the AIR synthase family.

Its subcellular location is the cytoplasm. The catalysed reaction is 2-formamido-N(1)-(5-O-phospho-beta-D-ribosyl)acetamidine + ATP = 5-amino-1-(5-phospho-beta-D-ribosyl)imidazole + ADP + phosphate + H(+). It functions in the pathway purine metabolism; IMP biosynthesis via de novo pathway; 5-amino-1-(5-phospho-D-ribosyl)imidazole from N(2)-formyl-N(1)-(5-phospho-D-ribosyl)glycinamide: step 2/2. The sequence is that of Phosphoribosylformylglycinamidine cyclo-ligase from Chromobacterium violaceum (strain ATCC 12472 / DSM 30191 / JCM 1249 / CCUG 213 / NBRC 12614 / NCIMB 9131 / NCTC 9757 / MK).